A 32-amino-acid chain; its full sequence is Acetolactate synthase, catabolic (32 aa).

It belongs to the TPP enzyme family. Homodimer.

It carries out the reaction 2 pyruvate + H(+) = (2S)-2-acetolactate + CO2. Its pathway is polyol metabolism; (R,R)-butane-2,3-diol biosynthesis; (R,R)-butane-2,3-diol from pyruvate: step 1/3. In Klebsiella aerogenes (Enterobacter aerogenes), this protein is Acetolactate synthase, catabolic (budB).